The primary structure comprises 327 residues: Probable cell division protein WhiA (327 aa).

Positions 275-308 form a DNA-binding region, H-T-H motif; that stretch reads SLEELGRLADPPMTKDAVAGRIRRLLSMADRKAK.

This sequence belongs to the WhiA family.

In terms of biological role, involved in cell division and chromosome segregation. This chain is Probable cell division protein WhiA, found in Mycobacterium avium (strain 104).